The primary structure comprises 873 residues: Alanine--tRNA ligase (873 aa).

The Zn(2+) site is built by His562, His566, Cys666, and His670.

Belongs to the class-II aminoacyl-tRNA synthetase family. Requires Zn(2+) as cofactor.

The protein localises to the cytoplasm. It catalyses the reaction tRNA(Ala) + L-alanine + ATP = L-alanyl-tRNA(Ala) + AMP + diphosphate. Catalyzes the attachment of alanine to tRNA(Ala) in a two-step reaction: alanine is first activated by ATP to form Ala-AMP and then transferred to the acceptor end of tRNA(Ala). Also edits incorrectly charged Ser-tRNA(Ala) and Gly-tRNA(Ala) via its editing domain. The protein is Alanine--tRNA ligase of Dichelobacter nodosus (strain VCS1703A).